The chain runs to 339 residues: Dihydroorotate dehydrogenase (quinone) (339 aa).

Residues 61–65 (AGLDK) and threonine 85 each bind FMN. Lysine 65 contacts substrate. 110–114 (NRMGF) provides a ligand contact to substrate. FMN contacts are provided by asparagine 138 and asparagine 171. A substrate-binding site is contributed by asparagine 171. The Nucleophile role is filled by serine 174. Asparagine 176 is a substrate binding site. Residues lysine 216 and threonine 244 each contribute to the FMN site. Substrate is bound at residue 245 to 246 (NT). Residues glycine 267, glycine 296, and 317–318 (YS) each bind FMN.

It belongs to the dihydroorotate dehydrogenase family. Type 2 subfamily. In terms of assembly, monomer. Requires FMN as cofactor.

The protein localises to the cell membrane. It carries out the reaction (S)-dihydroorotate + a quinone = orotate + a quinol. It participates in pyrimidine metabolism; UMP biosynthesis via de novo pathway; orotate from (S)-dihydroorotate (quinone route): step 1/1. In terms of biological role, catalyzes the conversion of dihydroorotate to orotate with quinone as electron acceptor. The protein is Dihydroorotate dehydrogenase (quinone) of Pseudomonas fluorescens (strain Pf0-1).